Here is a 598-residue protein sequence, read N- to C-terminus: NADH-quinone oxidoreductase subunit C/D (598 aa).

The segment at M1–E189 is NADH dehydrogenase I subunit C. The tract at residues D213–R598 is NADH dehydrogenase I subunit D.

In the N-terminal section; belongs to the complex I 30 kDa subunit family. It in the C-terminal section; belongs to the complex I 49 kDa subunit family. As to quaternary structure, NDH-1 is composed of 13 different subunits. Subunits NuoB, CD, E, F, and G constitute the peripheral sector of the complex.

The protein resides in the cell inner membrane. The enzyme catalyses a quinone + NADH + 5 H(+)(in) = a quinol + NAD(+) + 4 H(+)(out). Functionally, NDH-1 shuttles electrons from NADH, via FMN and iron-sulfur (Fe-S) centers, to quinones in the respiratory chain. The immediate electron acceptor for the enzyme in this species is believed to be ubiquinone. Couples the redox reaction to proton translocation (for every two electrons transferred, four hydrogen ions are translocated across the cytoplasmic membrane), and thus conserves the redox energy in a proton gradient. This Proteus mirabilis (strain HI4320) protein is NADH-quinone oxidoreductase subunit C/D.